Reading from the N-terminus, the 493-residue chain is Xaa-Pro dipeptidase (493 aa).

Ala2 is modified (N-acetylalanine). Ser167 bears the Phosphoserine mark. His255 lines the a dipeptide pocket. The Mn(2+) site is built by Asp276, Asp287, and His370. Asp287 contacts a dipeptide. His377 and Arg398 together coordinate a dipeptide. Mn(2+) is bound by residues Glu412 and Glu452.

The protein belongs to the peptidase M24B family. Eukaryotic-type prolidase subfamily. In terms of assembly, homodimer. The cofactor is Mn(2+).

It carries out the reaction Xaa-L-Pro dipeptide + H2O = an L-alpha-amino acid + L-proline. Its function is as follows. Dipeptidase that catalyzes the hydrolysis of dipeptides with a prolyl (Xaa-Pro) or hydroxyprolyl residue in the C-terminal position. The preferred dipeptide substrate is Gly-Pro, but other Xaa-Pro dipeptides, such as Ala-Pro, Met-Pro, Phe-Pro, Val-Pro and Leu-Pro, can be cleaved. Plays an important role in collagen metabolism because the high level of iminoacids in collagen. The chain is Xaa-Pro dipeptidase (Pepd) from Mus musculus (Mouse).